A 520-amino-acid polypeptide reads, in one-letter code: Pleckstrin homology domain-containing family A member 8 (520 aa).

A PH domain is found at 1-93 (MEGVLYKWTN…WLVALGSAKA (93 aa)). A Phosphothreonine modification is found at Thr-139. Ser-145 is modified (phosphoserine). A Phosphothreonine modification is found at Thr-153. Positions 255–268 (ISSEENTDGNTTVQ) are enriched in polar residues. The disordered stretch occupies residues 255-303 (ISSEENTDGNTTVQGERMKEDGEENLESHDRDLAQPGSDSVCSPESPWE). The segment covering 270 to 287 (ERMKEDGEENLESHDRDL) has biased composition (basic and acidic residues). Residues 311-520 (TFFSTMNTSF…IHGLESDEVV (210 aa)) are glycolipid transfer protein homology domain.

In terms of assembly, homodimer. Interacts with ARF1; the interaction together with phosphatidylinositol 4-phosphate binding is required for FAPP2 GlcCer transfer ability.

It is found in the golgi apparatus. The protein localises to the trans-Golgi network membrane. The protein resides in the membrane. Its function is as follows. Cargo transport protein that is required for apical transport from the trans-Golgi network (TGN). Transports AQP2 from the trans-Golgi network (TGN) to sites of AQP2 phosphorylation. Mediates the non-vesicular transport of glucosylceramide (GlcCer) from the trans-Golgi network (TGN) to the plasma membrane and plays a pivotal role in the synthesis of complex glycosphingolipids. Binding of both phosphatidylinositol 4-phosphate (PIP) and ARF1 are essential for the GlcCer transfer ability. Also required for primary cilium formation, possibly by being involved in the transport of raft lipids to the apical membrane, and for membrane tubulation. This is Pleckstrin homology domain-containing family A member 8 (Plekha8) from Rattus norvegicus (Rat).